The primary structure comprises 511 residues: Signal transduction histidine-protein kinase/phosphatase MprB (511 aa).

Residues 1–26 (MVGFRRGPRAPLRATSSLSLRWRVML) are Cytoplasmic-facing. A helical membrane pass occupies residues 27–47 (LAMSMVAMVVVLMSFAVYAVI). Topologically, residues 48–163 (SAALYSDIDN…PTEAVMTKLR (116 aa)) are extracellular. The helical transmembrane segment at 164 to 184 (AVLLIVGGVGVAVAAVAGGMV) threads the bilayer. Residues 185-511 (TRAGLRPVGR…SVDSQSARAR (327 aa)) are Cytoplasmic-facing. The region spanning 186 to 238 (RAGLRPVGRLTEAAERVARTDDLRPIPVFGSDELARLTEAFNLMLRALAESRE) is the HAMP domain. Residues 246-466 (DAGHELRTPL…AICMLLPGRP (221 aa)) enclose the Histidine kinase domain. Position 249 is a phosphohistidine; by autocatalysis (H249). The segment at 468–511 (PDSAYPAAPDDKKTEPVDTRGANGANSRGSANVISVDSQSARAR) is disordered. A compositionally biased stretch (basic and acidic residues) spans 476 to 485 (PDDKKTEPVD). Over residues 491–511 (GANSRGSANVISVDSQSARAR) the composition is skewed to polar residues.

The cofactor is Mg(2+). It depends on Mn(2+) as a cofactor. In terms of processing, autophosphorylated.

It localises to the cell membrane. The enzyme catalyses ATP + protein L-histidine = ADP + protein N-phospho-L-histidine.. In terms of biological role, member of the two-component regulatory system MprB/MprA which contributes to maintaining a balance among several systems involved in stress resistance and is required for establishment and maintenance of persistent infection in the host. In response to environmental signals MprB acts both as a membrane-associated protein kinase that undergoes autophosphorylation and subsequently transfers the phosphate to MprA, and a protein phosphatase that dephosphorylates phospho-MprA. The protein is Signal transduction histidine-protein kinase/phosphatase MprB (mprB) of Mycobacterium ulcerans (strain Agy99).